A 189-amino-acid chain; its full sequence is Orcokinin peptides (189 aa).

Positions 1 to 21 (MRGAGGALAVAVAALLVCCSA) are cleaved as a signal peptide. 2 propeptides span residues 22-124 (DPHQ…TFVK) and 145-174 (FYHLSSFDKKRYRADYPMDEIDLSHFPIGS).

It belongs to the orcokinin family. In terms of tissue distribution, orcokinin-like peptide: Expressed in corpora cardiaca (CC), corpora allata (CA), antennal lobe (AL) and gnathal ganglion (GNG) (at protein level). Expression in CC, CA and GNG detected in some animals, in AL in few animals (at protein level). Orcokinin-like peptide precursor-related peptide: Expressed in corpora cardiaca (CC), corpora allata (CA), antennal lobe (AL) and gnathal ganglion (GNG) (at protein level). Expression in GNG detected in most animals, expression in CC, CA and AL detected in some animals (at protein level).

The protein resides in the secreted. In terms of biological role, myotropic peptides. The sequence is that of Orcokinin peptides from Agrotis ipsilon (Black cutworm moth).